Reading from the N-terminus, the 476-residue chain is Aspartyl/glutamyl-tRNA(Asn/Gln) amidotransferase subunit B (476 aa).

Belongs to the GatB/GatE family. GatB subfamily. In terms of assembly, heterotrimer of A, B and C subunits.

The catalysed reaction is L-glutamyl-tRNA(Gln) + L-glutamine + ATP + H2O = L-glutaminyl-tRNA(Gln) + L-glutamate + ADP + phosphate + H(+). The enzyme catalyses L-aspartyl-tRNA(Asn) + L-glutamine + ATP + H2O = L-asparaginyl-tRNA(Asn) + L-glutamate + ADP + phosphate + 2 H(+). In terms of biological role, allows the formation of correctly charged Asn-tRNA(Asn) or Gln-tRNA(Gln) through the transamidation of misacylated Asp-tRNA(Asn) or Glu-tRNA(Gln) in organisms which lack either or both of asparaginyl-tRNA or glutaminyl-tRNA synthetases. The reaction takes place in the presence of glutamine and ATP through an activated phospho-Asp-tRNA(Asn) or phospho-Glu-tRNA(Gln). In Listeria monocytogenes serovar 1/2a (strain ATCC BAA-679 / EGD-e), this protein is Aspartyl/glutamyl-tRNA(Asn/Gln) amidotransferase subunit B.